We begin with the raw amino-acid sequence, 169 residues long: S-ribosylhomocysteine lyase (169 aa).

H54, H58, and C128 together coordinate Fe cation.

The protein belongs to the LuxS family. As to quaternary structure, homodimer. It depends on Fe cation as a cofactor.

The catalysed reaction is S-(5-deoxy-D-ribos-5-yl)-L-homocysteine = (S)-4,5-dihydroxypentane-2,3-dione + L-homocysteine. Involved in the synthesis of autoinducer 2 (AI-2) which is secreted by bacteria and is used to communicate both the cell density and the metabolic potential of the environment. The regulation of gene expression in response to changes in cell density is called quorum sensing. Catalyzes the transformation of S-ribosylhomocysteine (RHC) to homocysteine (HC) and 4,5-dihydroxy-2,3-pentadione (DPD). The protein is S-ribosylhomocysteine lyase of Shewanella woodyi (strain ATCC 51908 / MS32).